Consider the following 87-residue polypeptide: Small ribosomal subunit protein bS20 (87 aa).

Positions 1-27 (MANSVQATKRARQAEKHRQHNAGMRAA) are disordered. Over residues 9–20 (KRARQAEKHRQH) the composition is skewed to basic residues.

Belongs to the bacterial ribosomal protein bS20 family.

Binds directly to 16S ribosomal RNA. This Hydrogenovibrio crunogenus (strain DSM 25203 / XCL-2) (Thiomicrospira crunogena) protein is Small ribosomal subunit protein bS20.